The primary structure comprises 367 residues: Phosphoribosylaminoimidazole-succinocarboxamide synthase (367 aa).

It belongs to the SAICAR synthetase family.

It catalyses the reaction 5-amino-1-(5-phospho-D-ribosyl)imidazole-4-carboxylate + L-aspartate + ATP = (2S)-2-[5-amino-1-(5-phospho-beta-D-ribosyl)imidazole-4-carboxamido]succinate + ADP + phosphate + 2 H(+). It functions in the pathway purine metabolism; IMP biosynthesis via de novo pathway; 5-amino-1-(5-phospho-D-ribosyl)imidazole-4-carboxamide from 5-amino-1-(5-phospho-D-ribosyl)imidazole-4-carboxylate: step 1/2. The sequence is that of Phosphoribosylaminoimidazole-succinocarboxamide synthase from Shewanella oneidensis (strain ATCC 700550 / JCM 31522 / CIP 106686 / LMG 19005 / NCIMB 14063 / MR-1).